The following is a 630-amino-acid chain: Cytochrome B pre-mRNA-processing protein 2 (630 aa).

It is found in the mitochondrion. Appears to be specifically required for the splicing of the terminal intron (bI5) of the cytochrome b pre-mRNA. Can also stimulates the splicing of the omega intron of the precursor of large ribosomal RNA. The polypeptide is Cytochrome B pre-mRNA-processing protein 2 (CBP2) (Saccharomyces cerevisiae (strain ATCC 204508 / S288c) (Baker's yeast)).